Reading from the N-terminus, the 229-residue chain is Uracil-DNA glycosylase (229 aa).

The active-site Proton acceptor is aspartate 72.

Belongs to the uracil-DNA glycosylase (UDG) superfamily. UNG family.

It is found in the cytoplasm. It carries out the reaction Hydrolyzes single-stranded DNA or mismatched double-stranded DNA and polynucleotides, releasing free uracil.. Its function is as follows. Excises uracil residues from the DNA which can arise as a result of misincorporation of dUMP residues by DNA polymerase or due to deamination of cytosine. In Dichelobacter nodosus (strain VCS1703A), this protein is Uracil-DNA glycosylase.